The chain runs to 463 residues: L-seryl-tRNA(Sec) selenium transferase (463 aa).

Position 295 is an N6-(pyridoxal phosphate)lysine (Lys295).

It belongs to the SelA family. Homodecamer; pentamer of dimers. Binds only one seryl-tRNA(Sec) per dimer. Requires pyridoxal 5'-phosphate as cofactor.

Its subcellular location is the cytoplasm. The enzyme catalyses L-seryl-tRNA(Sec) + selenophosphate + H(+) = L-selenocysteinyl-tRNA(Sec) + phosphate. It functions in the pathway aminoacyl-tRNA biosynthesis; selenocysteinyl-tRNA(Sec) biosynthesis; selenocysteinyl-tRNA(Sec) from L-seryl-tRNA(Sec) (bacterial route): step 1/1. Its function is as follows. Converts seryl-tRNA(Sec) to selenocysteinyl-tRNA(Sec) required for selenoprotein biosynthesis. In Salmonella schwarzengrund (strain CVM19633), this protein is L-seryl-tRNA(Sec) selenium transferase.